The primary structure comprises 475 residues: Ribulose bisphosphate carboxylase large chain (475 aa).

The propeptide occupies 1–2; the sequence is MS. Pro-3 bears the N-acetylproline mark. The substrate site is built by Thr-65, Asn-123, and Thr-173. The active-site Proton acceptor is Lys-175. Lys-177 is a substrate binding site. Lys-201, Asp-203, and Glu-204 together coordinate Mg(2+). Position 201 is an N6-carboxylysine (Lys-201). Substrate-binding residues include Glu-204, His-294, Arg-295, His-327, Lys-334, Ser-379, Gly-381, Gly-403, and Gly-404. His-294 functions as the Proton acceptor in the catalytic mechanism.

It belongs to the RuBisCO large chain family. Type I subfamily. In terms of assembly, heterohexadecamer of 8 large chains and 8 small chains. Requires Mg(2+) as cofactor. Post-translationally, the disulfide bond which can form between Cys-247 in the large chain dimeric partners within the hexadecamer appears to be associated with oxidative stress and protein turnover. The disulfide bonds reported in 1RBO may be the result of oxidation during crystallization.

It localises to the plastid. The protein localises to the chloroplast. The enzyme catalyses 2 (2R)-3-phosphoglycerate + 2 H(+) = D-ribulose 1,5-bisphosphate + CO2 + H2O. It catalyses the reaction D-ribulose 1,5-bisphosphate + O2 = 2-phosphoglycolate + (2R)-3-phosphoglycerate + 2 H(+). With respect to regulation, abscisic acid (ABA) causes weak inhibition of RuBisCO catalytic activity, but more potent inhibition of RuBisCO activation. RuBisCO catalyzes two reactions: the carboxylation of D-ribulose 1,5-bisphosphate, the primary event in carbon dioxide fixation, as well as the oxidative fragmentation of the pentose substrate in the photorespiration process. Both reactions occur simultaneously and in competition at the same active site. Binds to abscisic acid (ABA) which has weakly inhibits carboxylation and more strongly inhibits enzyme activation. The protein is Ribulose bisphosphate carboxylase large chain of Spinacia oleracea (Spinach).